A 432-amino-acid polypeptide reads, in one-letter code: Methylenetetrahydrofolate--tRNA-(uracil-5-)-methyltransferase TrmFO (432 aa).

7 to 12 (GAGLAG) lines the FAD pocket.

Belongs to the MnmG family. TrmFO subfamily. The cofactor is FAD.

Its subcellular location is the cytoplasm. It carries out the reaction uridine(54) in tRNA + (6R)-5,10-methylene-5,6,7,8-tetrahydrofolate + NADH + H(+) = 5-methyluridine(54) in tRNA + (6S)-5,6,7,8-tetrahydrofolate + NAD(+). The enzyme catalyses uridine(54) in tRNA + (6R)-5,10-methylene-5,6,7,8-tetrahydrofolate + NADPH + H(+) = 5-methyluridine(54) in tRNA + (6S)-5,6,7,8-tetrahydrofolate + NADP(+). Functionally, catalyzes the folate-dependent formation of 5-methyl-uridine at position 54 (M-5-U54) in all tRNAs. The chain is Methylenetetrahydrofolate--tRNA-(uracil-5-)-methyltransferase TrmFO from Anoxybacillus flavithermus (strain DSM 21510 / WK1).